We begin with the raw amino-acid sequence, 88 residues long: Large ribosomal subunit protein bL27 (88 aa).

Residues 1–13 (MATKKGASSSSNG) show a composition bias toward polar residues. Positions 1-23 (MATKKGASSSSNGRDSEAKRLGV) are disordered.

This sequence belongs to the bacterial ribosomal protein bL27 family.

This is Large ribosomal subunit protein bL27 from Corynebacterium urealyticum (strain ATCC 43042 / DSM 7109).